The chain runs to 506 residues: NAD(P)H-quinone oxidoreductase subunit 2 (506 aa).

The next 13 membrane-spanning stretches (helical) occupy residues 14–34, 42–62, 79–99, 108–128, 132–152, 167–187, 206–226, 240–260, 276–296, 302–322, 330–350, 374–394, and 409–429; these read AIIP…VDLA, WAPI…ALQW, LAIA…LISW, PIGE…LLCG, LISI…LSGY, LLVG…LYGL, FITS…IAAV, PTPV…AFAI, LLFT…ALAQ, MLAY…VSGT, VLYL…VILF, LGLS…GFFG, and LLVI…ISVI.

It belongs to the complex I subunit 2 family. As to quaternary structure, NDH-1 can be composed of about 15 different subunits; different subcomplexes with different compositions have been identified which probably have different functions.

Its subcellular location is the cellular thylakoid membrane. The enzyme catalyses a plastoquinone + NADH + (n+1) H(+)(in) = a plastoquinol + NAD(+) + n H(+)(out). It catalyses the reaction a plastoquinone + NADPH + (n+1) H(+)(in) = a plastoquinol + NADP(+) + n H(+)(out). Functionally, NDH-1 shuttles electrons from an unknown electron donor, via FMN and iron-sulfur (Fe-S) centers, to quinones in the respiratory and/or the photosynthetic chain. The immediate electron acceptor for the enzyme in this species is believed to be plastoquinone. Couples the redox reaction to proton translocation, and thus conserves the redox energy in a proton gradient. Cyanobacterial NDH-1 also plays a role in inorganic carbon-concentration. The protein is NAD(P)H-quinone oxidoreductase subunit 2 of Prochlorococcus marinus (strain MIT 9312).